We begin with the raw amino-acid sequence, 218 residues long: Probable GTP-binding protein EngB (218 aa).

One can recognise an EngB-type G domain in the interval 44-218 (DRIEVCFAGR…LRATIATIET (175 aa)). GTP is bound by residues 52 to 59 (GRSNVGKS), 79 to 83 (GRTQE), 97 to 100 (DLPG), 164 to 167 (TKSD), and 198 to 200 (TSS). S59 and T81 together coordinate Mg(2+).

Belongs to the TRAFAC class TrmE-Era-EngA-EngB-Septin-like GTPase superfamily. EngB GTPase family. Requires Mg(2+) as cofactor.

In terms of biological role, necessary for normal cell division and for the maintenance of normal septation. The chain is Probable GTP-binding protein EngB from Jannaschia sp. (strain CCS1).